A 213-amino-acid chain; its full sequence is Imidazoleglycerol-phosphate dehydratase (213 aa).

It belongs to the imidazoleglycerol-phosphate dehydratase family.

The protein localises to the cytoplasm. It carries out the reaction D-erythro-1-(imidazol-4-yl)glycerol 3-phosphate = 3-(imidazol-4-yl)-2-oxopropyl phosphate + H2O. The protein operates within amino-acid biosynthesis; L-histidine biosynthesis; L-histidine from 5-phospho-alpha-D-ribose 1-diphosphate: step 6/9. This chain is Imidazoleglycerol-phosphate dehydratase, found in Trichodesmium erythraeum (strain IMS101).